A 470-amino-acid polypeptide reads, in one-letter code: UDP-N-acetylmuramoylalanine--D-glutamate ligase (470 aa).

124-130 (GTNGKTT) contacts ATP.

It belongs to the MurCDEF family.

It localises to the cytoplasm. The enzyme catalyses UDP-N-acetyl-alpha-D-muramoyl-L-alanine + D-glutamate + ATP = UDP-N-acetyl-alpha-D-muramoyl-L-alanyl-D-glutamate + ADP + phosphate + H(+). It participates in cell wall biogenesis; peptidoglycan biosynthesis. Cell wall formation. Catalyzes the addition of glutamate to the nucleotide precursor UDP-N-acetylmuramoyl-L-alanine (UMA). The protein is UDP-N-acetylmuramoylalanine--D-glutamate ligase of Prochlorococcus marinus (strain SARG / CCMP1375 / SS120).